Here is a 78-residue protein sequence, read N- to C-terminus: Large ribosomal subunit protein bL28 (78 aa).

A disordered region spans residues methionine 1–histidine 20.

Belongs to the bacterial ribosomal protein bL28 family.

This Pseudomonas putida (strain W619) protein is Large ribosomal subunit protein bL28.